We begin with the raw amino-acid sequence, 319 residues long: MMVLKVEELVTGKKNGGGDAGEFLPEDFRDGEYEAAVTLEKQEDLKTLPAHFVSLGEQQWKIEKEREAELKKKKLEQRSKLENLEDLEIIIQLKKRKKYRKTKVPVVKEPEPEVITEPVDVPRFLKAALENKLPVVEKFLSDKNNPDVCDEYKRTALHRACLEGHLAIVEKLIEAGAQIEFRDMLESTAIHWASRGGNLDVLKLLLNKGAKISARDKLLSTALHVAVRTGHYECAEHLIACEADLNAKDREGDTPLHDAVRLNRYKMIRLLITYGADLNVKNCAGKTPMDLVLNWQNGTKAIFDSLKENSYKASRIATF.

The stretch at 63–89 forms a coiled coil; the sequence is EKEREAELKKKKLEQRSKLENLEDLEI. 5 ANK repeats span residues 152–181, 185–214, 218–247, 251–280, and 284–315; these read YKRTALHRACLEGHLAIVEKLIEAGAQIEF, LESTAIHWASRGGNLDVLKLLLNKGAKISA, LLSTALHVAVRTGHYECAEHLIACEADLNA, EGDTPLHDAVRLNRYKMIRLLITYGADLNV, and AGKTPMDLVLNWQNGTKAIFDSLKENSYKASR.

As to quaternary structure, interacts with TTN/titin and YBX1. In terms of tissue distribution, expressed in heart. In postnatal neonatal heart, it is expressed in an asymmetrical way; left ventricle favored towards right ventricle. Whether or not this could be correlated with a hypertrophic heart is still a matter of debate. Levels increase gradually from newborn to adult.

It localises to the nucleus. Its function is as follows. May play an important role in endothelial cell activation. May act as a nuclear transcription factor that negatively regulates the expression of cardiac genes. This is Ankyrin repeat domain-containing protein 1 (ANKRD1) from Sus scrofa (Pig).